Here is a 379-residue protein sequence, read N- to C-terminus: UDP-4-amino-4-deoxy-L-arabinose--oxoglutarate aminotransferase (379 aa).

At Lys182 the chain carries N6-(pyridoxal phosphate)lysine.

This sequence belongs to the DegT/DnrJ/EryC1 family. ArnB subfamily. As to quaternary structure, homodimer. It depends on pyridoxal 5'-phosphate as a cofactor.

The catalysed reaction is UDP-4-amino-4-deoxy-beta-L-arabinose + 2-oxoglutarate = UDP-beta-L-threo-pentopyranos-4-ulose + L-glutamate. Its pathway is nucleotide-sugar biosynthesis; UDP-4-deoxy-4-formamido-beta-L-arabinose biosynthesis; UDP-4-deoxy-4-formamido-beta-L-arabinose from UDP-alpha-D-glucuronate: step 2/3. The protein operates within bacterial outer membrane biogenesis; lipopolysaccharide biosynthesis. In terms of biological role, catalyzes the conversion of UDP-4-keto-arabinose (UDP-Ara4O) to UDP-4-amino-4-deoxy-L-arabinose (UDP-L-Ara4N). The modified arabinose is attached to lipid A and is required for resistance to polymyxin and cationic antimicrobial peptides. The protein is UDP-4-amino-4-deoxy-L-arabinose--oxoglutarate aminotransferase of Sodalis glossinidius (strain morsitans).